Consider the following 132-residue polypeptide: Small ribosomal subunit protein uS8c (132 aa).

It belongs to the universal ribosomal protein uS8 family. As to quaternary structure, part of the 30S ribosomal subunit.

The protein localises to the plastid. It localises to the chloroplast. One of the primary rRNA binding proteins, it binds directly to 16S rRNA central domain where it helps coordinate assembly of the platform of the 30S subunit. This chain is Small ribosomal subunit protein uS8c (rps8), found in Angiopteris evecta (Mule's foot fern).